A 227-amino-acid chain; its full sequence is 7-cyano-7-deazaguanine synthase (227 aa).

ATP is bound at residue 10 to 20 (LSGGLDSCVAT). Cys-193, Cys-201, Cys-204, and Cys-207 together coordinate Zn(2+).

It belongs to the QueC family. Zn(2+) serves as cofactor.

It carries out the reaction 7-carboxy-7-deazaguanine + NH4(+) + ATP = 7-cyano-7-deazaguanine + ADP + phosphate + H2O + H(+). It functions in the pathway purine metabolism; 7-cyano-7-deazaguanine biosynthesis. In terms of biological role, catalyzes the ATP-dependent conversion of 7-carboxy-7-deazaguanine (CDG) to 7-cyano-7-deazaguanine (preQ(0)). The polypeptide is 7-cyano-7-deazaguanine synthase (Methanobrevibacter smithii (strain ATCC 35061 / DSM 861 / OCM 144 / PS)).